Reading from the N-terminus, the 536-residue chain is Phosphoenolpyruvate carboxykinase (ATP) (536 aa).

Positions 61, 195, and 201 each coordinate substrate. ATP is bound by residues Lys201, His220, and 236–244 (GLSGTGKTT). The Mn(2+) site is built by Lys201 and His220. Asp257 contacts Mn(2+). Glu285, Arg322, and Thr447 together coordinate ATP. Position 322 (Arg322) interacts with substrate.

This sequence belongs to the phosphoenolpyruvate carboxykinase (ATP) family. The cofactor is Mn(2+).

It is found in the cytoplasm. It catalyses the reaction oxaloacetate + ATP = phosphoenolpyruvate + ADP + CO2. It participates in carbohydrate biosynthesis; gluconeogenesis. Involved in the gluconeogenesis. Catalyzes the conversion of oxaloacetate (OAA) to phosphoenolpyruvate (PEP) through direct phosphoryl transfer between the nucleoside triphosphate and OAA. The protein is Phosphoenolpyruvate carboxykinase (ATP) of Brucella anthropi (strain ATCC 49188 / DSM 6882 / CCUG 24695 / JCM 21032 / LMG 3331 / NBRC 15819 / NCTC 12168 / Alc 37) (Ochrobactrum anthropi).